The sequence spans 205 residues: Holliday junction branch migration complex subunit RuvA (205 aa).

Positions 1–64 (MIGKLKGTID…EDQLKLFGFL (64 aa)) are domain I. Positions 65-143 (SALEREWFRL…AFSGEMAPSI (79 aa)) are domain II. Positions 144–153 (GLKQELGEGV) are flexible linker. Residues 153 to 205 (VAAAPVADAVSALTNLGYSRDQAANAVAAALKNGGEGGDSAKLIRLGLKELSR) are domain III.

This sequence belongs to the RuvA family. As to quaternary structure, homotetramer. Forms an RuvA(8)-RuvB(12)-Holliday junction (HJ) complex. HJ DNA is sandwiched between 2 RuvA tetramers; dsDNA enters through RuvA and exits via RuvB. An RuvB hexamer assembles on each DNA strand where it exits the tetramer. Each RuvB hexamer is contacted by two RuvA subunits (via domain III) on 2 adjacent RuvB subunits; this complex drives branch migration. In the full resolvosome a probable DNA-RuvA(4)-RuvB(12)-RuvC(2) complex forms which resolves the HJ.

Its subcellular location is the cytoplasm. Functionally, the RuvA-RuvB-RuvC complex processes Holliday junction (HJ) DNA during genetic recombination and DNA repair, while the RuvA-RuvB complex plays an important role in the rescue of blocked DNA replication forks via replication fork reversal (RFR). RuvA specifically binds to HJ cruciform DNA, conferring on it an open structure. The RuvB hexamer acts as an ATP-dependent pump, pulling dsDNA into and through the RuvAB complex. HJ branch migration allows RuvC to scan DNA until it finds its consensus sequence, where it cleaves and resolves the cruciform DNA. This Rhizobium meliloti (strain 1021) (Ensifer meliloti) protein is Holliday junction branch migration complex subunit RuvA.